A 124-amino-acid polypeptide reads, in one-letter code: Small ribosomal subunit protein uS13 (124 aa).

The segment covering 94 to 117 (NLPVRGQRTRTNARTRKGPRKTVA) has biased composition (basic residues). Residues 94–124 (NLPVRGQRTRTNARTRKGPRKTVANKKIESK) are disordered.

The protein belongs to the universal ribosomal protein uS13 family. As to quaternary structure, part of the 30S ribosomal subunit. Forms a loose heterodimer with protein S19. Forms two bridges to the 50S subunit in the 70S ribosome.

Its function is as follows. Located at the top of the head of the 30S subunit, it contacts several helices of the 16S rRNA. In the 70S ribosome it contacts the 23S rRNA (bridge B1a) and protein L5 of the 50S subunit (bridge B1b), connecting the 2 subunits; these bridges are implicated in subunit movement. Contacts the tRNAs in the A and P-sites. This is Small ribosomal subunit protein uS13 from Mycoplasma pneumoniae (strain ATCC 29342 / M129 / Subtype 1) (Mycoplasmoides pneumoniae).